Here is a 408-residue protein sequence, read N- to C-terminus: Multidrug resistance protein MdtG (408 aa).

A run of 11 helical transmembrane segments spans residues 16 to 36 (LIVA…VMPF), 58 to 78 (IVFS…GGLA), 92 to 112 (LGMG…QFLI), 115 to 135 (ALLG…ATQV), 146 to 166 (TLST…GLLA), 173 to 193 (PVFF…LFCI), 224 to 244 (LFVT…ILTL), 256 to 276 (VAFI…LSAP), 290 to 310 (ILIT…YVQT), 319 to 339 (FLLG…LVYN), and 378 to 398 (AVFL…WNSL).

This sequence belongs to the major facilitator superfamily. DHA1 family. MdtG (TC 2.A.1.2.20) subfamily.

It localises to the cell inner membrane. Its function is as follows. Confers resistance to fosfomycin and deoxycholate. This is Multidrug resistance protein MdtG from Escherichia coli O81 (strain ED1a).